The sequence spans 96 residues: uncharacterized protein (96 aa).

Residues 53-71 form a helical membrane-spanning segment; that stretch reads VLLMPLLQSFVLSLALMGV.

It localises to the membrane. This is an uncharacterized protein from Saccharomyces cerevisiae (strain ATCC 204508 / S288c) (Baker's yeast).